Consider the following 972-residue polypeptide: Hyaluronan synthase (972 aa).

An A1 region spans residues 152–325; it reads KPEHQHVGLS…VSLDWRLEQF (174 aa). The tract at residues 432 to 604 is A2; it reads EDSHINRVPL…IRAWHLTDGF (173 aa).

The protein belongs to the glycosyltransferase 2 family. CS/HAS subfamily. Mg(2+) serves as cofactor. It depends on Co(2+) as a cofactor.

It is found in the cell membrane. It carries out the reaction [hyaluronan](n) + UDP-N-acetyl-alpha-D-glucosamine = N-acetyl-beta-D-glucosaminyl-(1-&gt;4)-[hyaluronan](n) + UDP + H(+). The enzyme catalyses N-acetyl-beta-D-glucosaminyl-(1-&gt;4)-[hyaluronan](n) + UDP-alpha-D-glucuronate = [hyaluronan](n+1) + UDP + H(+). The catalysed reaction is 3-O-(beta-D-GalNAc-(1-&gt;4)-beta-D-GlcA-(1-&gt;3)-beta-D-Gal-(1-&gt;3)-beta-D-Gal-(1-&gt;4)-beta-D-Xyl)-L-seryl-[protein] + UDP-alpha-D-glucuronate = 3-O-(beta-D-GlcA-(1-&gt;3)-beta-D-GalNAc-(1-&gt;4)-beta-D-GlcA-(1-&gt;3)-beta-D-Gal-(1-&gt;3)-beta-D-Gal-(1-&gt;4)-beta-D-Xyl)-L-seryl-[protein] + UDP + H(+). It catalyses the reaction 3-O-{[beta-D-GalNAc-(1-&gt;4)-beta-D-GlcA-(1-&gt;3)](n)-beta-D-GalNAc-(1-&gt;4)-beta-D-GlcA-(1-&gt;3)-beta-D-Gal-(1-&gt;3)-beta-D-Gal-(1-&gt;4)-beta-D-Xyl}-L-seryl-[protein] + UDP-alpha-D-glucuronate = 3-O-{beta-D-GlcA-(1-&gt;3)-[beta-D-GalNAc-(1-&gt;4)-beta-D-GlcA-(1-&gt;3)](n)-beta-D-GalNAc-(1-&gt;4)-beta-D-GlcA-(1-&gt;3)-beta-D-Gal-(1-&gt;3)-beta-D-Gal-(1-&gt;4)-beta-D-Xyl}-L-seryl-[protein] + UDP + H(+). Functionally, catalyzes the polymerization of hyaluronan, a polysaccharide composed of a repeating disaccharide of N-acetylglucosamine (GlcNAc) and glucuronic acid (GlcUA) units. Each unit has the composition in beta-(1-&gt;4)-GlcUA-beta-(1-&gt;3)-GlcNAc. This is Hyaluronan synthase (hyaD) from Pasteurella multocida.